A 393-amino-acid polypeptide reads, in one-letter code: Probable acetyl-CoA acetyltransferase (393 aa).

Residue Cys88 is the Acyl-thioester intermediate of the active site. Catalysis depends on proton acceptor residues His348 and Cys378.

This sequence belongs to the thiolase-like superfamily. Thiolase family.

It localises to the cytoplasm. It carries out the reaction 2 acetyl-CoA = acetoacetyl-CoA + CoA. The polypeptide is Probable acetyl-CoA acetyltransferase (yqeF) (Escherichia coli (strain K12)).